We begin with the raw amino-acid sequence, 145 residues long: Photosystem I reaction center subunit XI (145 aa).

3 helical membrane passes run 48-68, 75-95, and 125-145; these read LEIG…LGPL, LLVG…ALTI, and IGAL…SFFA.

This sequence belongs to the PsaL family.

The protein resides in the plastid. The protein localises to the chloroplast thylakoid membrane. The polypeptide is Photosystem I reaction center subunit XI (Isochrysis galbana (Marine planktonic alga)).